Reading from the N-terminus, the 1202-residue chain is Protein jagged-2 (1202 aa).

The Extracellular segment spans residues 1-1037 (GACCDGDGRT…ETVVMGGSST (1037 aa)). An N-linked (GlcNAc...) asparagine glycan is attached at asparagine 107. The region spanning 150-194 (VRCDENYYSATCNKFCRPRNDFFGHYTCDQYGNKACMDGWMGKEC) is the DSL domain. 42 disulfides stabilise this stretch: cysteine 152–cysteine 161, cysteine 165–cysteine 177, cysteine 185–cysteine 194, cysteine 199–cysteine 210, cysteine 203–cysteine 216, cysteine 218–cysteine 227, cysteine 230–cysteine 241, cysteine 236–cysteine 247, cysteine 249–cysteine 258, cysteine 265–cysteine 277, cysteine 271–cysteine 287, cysteine 289–cysteine 298, cysteine 305–cysteine 316, cysteine 310–cysteine 325, cysteine 327–cysteine 336, cysteine 343–cysteine 354, cysteine 348–cysteine 363, cysteine 365–cysteine 374, cysteine 381–cysteine 392, cysteine 386–cysteine 401, cysteine 403–cysteine 412, cysteine 419–cysteine 429, cysteine 423–cysteine 438, cysteine 440–cysteine 449, cysteine 456–cysteine 467, cysteine 461–cysteine 476, cysteine 478–cysteine 487, cysteine 495–cysteine 506, cysteine 500–cysteine 515, cysteine 517–cysteine 526, cysteine 544–cysteine 567, cysteine 561–cysteine 577, cysteine 579–cysteine 588, cysteine 595–cysteine 606, cysteine 600–cysteine 615, cysteine 617–cysteine 626, cysteine 633–cysteine 644, cysteine 638–cysteine 653, cysteine 655–cysteine 664, cysteine 671–cysteine 682, cysteine 676–cysteine 691, and cysteine 693–cysteine 702. The EGF-like 1 domain occupies 195–228 (KEAVCKQGCNLLHGGCTVPGECRCSYGWQGKFCD). An EGF-like 2; atypical domain is found at 229 to 259 (ECVPYPGCVHGSCVEPWHCDCETNWGGLLCD). EGF-like domains follow at residues 261–299 (DLNY…KNCE) and 301–337 (AEHA…PTCA). The region spanning 339–375 (DIDECASNPCAAGGTCVDQVDGFECICPEQWVGATCQ) is the EGF-like 5; calcium-binding domain. The EGF-like 6; calcium-binding domain maps to 377–413 (DANECEGKPCLNAFSCKNLIGGYYCDCLPGWKGANCH). The EGF-like 7; calcium-binding domain occupies 415 to 450 (NINDCHGQCQHGGTCKDLVNGYQCVCPRGFGGRHCE). EGF-like domains follow at residues 452-488 (EYYK…PLCE) and 490-527 (DVDL…KNCS). The N-linked (GlcNAc...) asparagine glycan is linked to asparagine 525. The EGF-like 10; atypical domain occupies 529-589 (PRETCPGGAC…DSGFTGTYCH (61 aa)). A glycan (N-linked (GlcNAc...) asparagine) is linked at asparagine 574. Residues 591-627 (NIDDCMGQPCRNGGTCIDEVDSFACFCPSGWEGELCD) form the EGF-like 11; calcium-binding domain. Residues 629-665 (NPNDCLPDPCHSRGRCYDLVNDFYCVCDDGWKDKTCH) enclose the EGF-like 12; calcium-binding domain. EGF-like domains lie at 667–703 (REFQ…STCT) and 706–742 (KNSS…RTCT). N-linked (GlcNAc...) asparagine glycosylation occurs at asparagine 707. 9 cysteine pairs are disulfide-bonded: cysteine 710-cysteine 721, cysteine 715-cysteine 730, cysteine 732-cysteine 741, cysteine 748-cysteine 759, cysteine 753-cysteine 768, cysteine 770-cysteine 779, cysteine 786-cysteine 797, cysteine 791-cysteine 806, and cysteine 808-cysteine 817. Residues 744–780 (NTNDCNPLPCYNGGICVDGVNWFRCECAPGFAGPDCR) form the EGF-like 15; calcium-binding domain. Residues 782–818 (NIDECQSSPCAYGATCVDEINGYRCSCPPGRSGPRCQ) enclose the EGF-like 16; calcium-binding domain. An N-linked (GlcNAc...) asparagine glycan is attached at asparagine 1015. The chain crosses the membrane as a helical span at residues 1038–1058 (GLLVPVLCSVFSVLWLACMVI). Topologically, residues 1059-1202 (CVWWTRKRRK…TKDVRCAGRE (144 aa)) are cytoplasmic. Basic and acidic residues-rich tracts occupy residues 1070 to 1080 (RERSRLPRDES), 1147 to 1159 (LSRG…RSRE), and 1185 to 1202 (VDNR…AGRE). Residues 1070–1202 (RERSRLPRDE…TKDVRCAGRE (133 aa)) are disordered. Serine 1080 bears the Phosphoserine mark.

It is found in the membrane. Functionally, putative Notch ligand involved in the mediation of Notch signaling. May have a role in neurogenesis in the peripheral nervous system, limb development and in the adult brain. The protein is Protein jagged-2 (Jag2) of Rattus norvegicus (Rat).